The chain runs to 429 residues: Glutamate-1-semialdehyde 2,1-aminomutase 2 (429 aa).

K268 carries the N6-(pyridoxal phosphate)lysine modification.

This sequence belongs to the class-III pyridoxal-phosphate-dependent aminotransferase family. HemL subfamily. As to quaternary structure, homodimer. The cofactor is pyridoxal 5'-phosphate.

The protein resides in the cytoplasm. It catalyses the reaction (S)-4-amino-5-oxopentanoate = 5-aminolevulinate. It functions in the pathway porphyrin-containing compound metabolism; protoporphyrin-IX biosynthesis; 5-aminolevulinate from L-glutamyl-tRNA(Glu): step 2/2. This Staphylococcus carnosus (strain TM300) protein is Glutamate-1-semialdehyde 2,1-aminomutase 2.